Here is a 230-residue protein sequence, read N- to C-terminus: Porin OmpL (230 aa).

The first 20 residues, methionine 1–alanine 20, serve as a signal peptide directing secretion.

It belongs to the oligogalacturonate-specific porin KdgM (TC 1.B.35) family. OmpL subfamily.

Its subcellular location is the cell outer membrane. Functionally, outer membrane channel protein that allows an efficient diffusion of low-molecular-weight solutes such as small sugars and tetraglycine. However, the specific substrate recognized by the OmpL channel is unknown. The sequence is that of Porin OmpL (ompL) from Escherichia coli (strain K12).